The sequence spans 454 residues: tRNA-2-methylthio-N(6)-dimethylallyladenosine synthase (454 aa).

An MTTase N-terminal domain is found at 6–122; that stretch reads RRYHITTFGC…LKDLLESVFA (117 aa). Residues Cys15, Cys51, Cys85, Cys157, Cys161, and Cys164 each coordinate [4Fe-4S] cluster. Positions 143–380 constitute a Radical SAM core domain; it reads RDSTVTAWVN…NHLVNVKAAE (238 aa). The region spanning 383 to 447 is the TRAM domain; sequence QRYMGRIEEV…AFSLTGEPIE (65 aa).

It belongs to the methylthiotransferase family. MiaB subfamily. Monomer. Requires [4Fe-4S] cluster as cofactor.

Its subcellular location is the cytoplasm. The enzyme catalyses N(6)-dimethylallyladenosine(37) in tRNA + (sulfur carrier)-SH + AH2 + 2 S-adenosyl-L-methionine = 2-methylsulfanyl-N(6)-dimethylallyladenosine(37) in tRNA + (sulfur carrier)-H + 5'-deoxyadenosine + L-methionine + A + S-adenosyl-L-homocysteine + 2 H(+). Functionally, catalyzes the methylthiolation of N6-(dimethylallyl)adenosine (i(6)A), leading to the formation of 2-methylthio-N6-(dimethylallyl)adenosine (ms(2)i(6)A) at position 37 in tRNAs that read codons beginning with uridine. This chain is tRNA-2-methylthio-N(6)-dimethylallyladenosine synthase, found in Nostoc sp. (strain PCC 7120 / SAG 25.82 / UTEX 2576).